The following is a 388-amino-acid chain: P2X purinoceptor 4 (388 aa).

The Cytoplasmic segment spans residues 1–33 (MAGCCSVLGSFLFEYDTPRIVLIRSRKVGLMNR). A helical transmembrane segment spans residues 34–54 (AVQLLILAYVIGWVFVWEKGY). Residues 55 to 338 (QETDSVVSSV…KFDIIPTMIN (284 aa)) are Extracellular-facing. ATP contacts are provided by Lys67 and Lys69. Residues Lys67 and Lys69 each contribute to the CTP site. 2 N-linked (GlcNAc...) asparagine glycosylation sites follow: Asn75 and Asn110. Disulfide bonds link Cys116–Cys165, Cys126–Cys149, and Cys132–Cys159. Asn153 and Asn184 each carry an N-linked (GlcNAc...) asparagine glycan. Positions 186 and 188 each coordinate ATP. Thr186 is a CTP binding site. Residues Asn199 and Asn208 are each glycosylated (N-linked (GlcNAc...) asparagine). 2 disulfides stabilise this stretch: Cys217-Cys227 and Cys261-Cys270. ATP is bound by residues Asn293, Arg295, and Lys313. Residues Asn293, Arg295, and Lys313 each contribute to the CTP site. A helical membrane pass occupies residues 339 to 359 (VGSGLALLGVATVLCDVIVLY). Residues 360–388 (CMKKKYYYRDKKYKYVEDYEQGLSGEMNQ) lie on the Cytoplasmic side of the membrane.

The protein belongs to the P2X receptor family. Functional P2RXs are organized as homomeric and heteromeric trimers. Forms heterotrimer with P2RX1. Interacts with P2RX7 (via C-terminus); this interaction is functional only in the presence of ATP. Forms heterotrimer with P2RX4; functional differences between homomeric P2RX4 and P2RX4/6 heterotrimer are minor. Interacts with AP1M2. As to expression, widespread distribution in the brain. Strongly expressed in microglial cells. Also expressed in epithelial cells.

The protein resides in the cell membrane. It is found in the lysosome membrane. The enzyme catalyses K(+)(in) = K(+)(out). It catalyses the reaction Na(+)(in) = Na(+)(out). It carries out the reaction Ca(2+)(in) = Ca(2+)(out). Its activity is regulated as follows. Activated by ATP. pH-dependent and inhibited by acidic pH. ATP-gated nonselective transmembrane cation channel permeable to potassium, sodium and calcium. CTP, but not GTP or UTP, functions as a weak affinity agonist for P2RX4. Activated by extracellularly released ATP, it plays multiple role in immunity and central nervous system physiology. Plays a key role in initial steps of T-cell activation and Ca(2+) microdomain formation. Also participates in basal T-cell activity without TCR/CD3 stimulation. Promotes the differentiation and activation of Th17 cells via expression of retinoic acid-related orphan receptor C/RORC. Upon activation, drives microglia motility via the PI3K/Akt pathway. Could also function as an ATP-gated cation channel of lysosomal membranes. The protein is P2X purinoceptor 4 (P2rx4) of Rattus norvegicus (Rat).